The chain runs to 561 residues: Developmental and secondary metabolism regulator veA (561 aa).

3 disordered regions span residues 1–23 (MANR…RITR), 41–60 (ARAC…VDPP), and 258–361 (AYAR…PQGI). The span at 12 to 23 (NETEHSVSRITR) shows a compositional bias: basic and acidic residues. The Velvet domain maps to 25–233 (GKQLTYKLSV…AEQGCRVRIR (209 aa)). The short motif at 39-44 (ERARAC) is the Nuclear localization signal element. Over residues 258-268 (AYARSSDRFTT) the composition is skewed to basic and acidic residues. Over residues 324–339 (SHSQTPSYQSHLSFGS) the composition is skewed to polar residues. Residues 347–357 (PHMPPTPPPVA) show a composition bias toward pro residues. The segment at 438–485 (RPQTPNLPAMPPPKPLSNDYANHVVPSVECTSPGGSGGGGYDNVRGKR) is PEST. Residues 491–524 (GPTYGKRSHEDTFGLDDRSMQNGMRPDTEPYPAY) form a disordered region. Residues 497-509 (RSHEDTFGLDDRS) show a composition bias toward basic and acidic residues.

The protein belongs to the velvet family. VeA subfamily. Component of the heterotrimeric velvet complex composed of laeA, veA and velB; velA acting as a bridging protein between laeA and velB. Interacts with kapA. Interacts with vosA and velc.

It is found in the nucleus. The protein localises to the cytoplasm. Its function is as follows. Component of the velvet transcription factor complex that controls sexual/asexual developmental ratio in response to light, promoting sexual development in the darkness while stimulating asexual sporulation under illumination. The velvet complex acts as a global regulator for secondary metabolite gene expression. Controls the expression of the penicillin gene cluster. Positively controls the expression of the class V chitinase chiB1. Positively controls the expression of the transcription factor atfA. Required for cell wall integrity and controls hyphal branching. This is Developmental and secondary metabolism regulator veA from Penicillium rubens (strain ATCC 28089 / DSM 1075 / NRRL 1951 / Wisconsin 54-1255) (Penicillium chrysogenum).